The sequence spans 257 residues: Reticulon-like protein B4 (257 aa).

Residues 19–42 (IHGHGDSSSLSDSDDDKKSTSSSS) are disordered. Positions 68–257 (PADIFLWRNK…PRGALNKKKD (190 aa)) constitute a Reticulon domain. 3 consecutive transmembrane segments (helical) span residues 78–98 (KVSG…ELFE), 99–119 (YHLL…LFLW), and 173–193 (FILV…YNFL).

As to quaternary structure, interacts with VirB2.

The protein localises to the endoplasmic reticulum membrane. Plays a role in the Agrobacterium-mediated plant transformation via its interaction with VirB2, the major component of the T-pilus. This Arabidopsis thaliana (Mouse-ear cress) protein is Reticulon-like protein B4 (RTNLB4).